Reading from the N-terminus, the 193-residue chain is Rho-related protein racF2 (193 aa).

A GTP-binding site is contributed by 10-17 (GDGAVGKT). The Effector region signature appears at 32–40 (YLPTVFDNY). GTP is bound by residues 57-61 (DTAGQ) and 115-118 (TKQD). The residue at position 190 (C190) is a Cysteine methyl ester. C190 carries S-geranylgeranyl cysteine lipidation. A propeptide spans 191-193 (TIM) (removed in mature form).

This sequence belongs to the small GTPase superfamily. Rho family.

The protein resides in the cell membrane. This chain is Rho-related protein racF2 (racF2), found in Dictyostelium discoideum (Social amoeba).